Here is a 232-residue protein sequence, read N- to C-terminus: Putative N-acetylmannosamine-6-phosphate 2-epimerase (232 aa).

This sequence belongs to the NanE family.

It catalyses the reaction an N-acyl-D-glucosamine 6-phosphate = an N-acyl-D-mannosamine 6-phosphate. Its pathway is amino-sugar metabolism; N-acetylneuraminate degradation; D-fructose 6-phosphate from N-acetylneuraminate: step 3/5. Functionally, converts N-acetylmannosamine-6-phosphate (ManNAc-6-P) to N-acetylglucosamine-6-phosphate (GlcNAc-6-P). This chain is Putative N-acetylmannosamine-6-phosphate 2-epimerase, found in Borrelia garinii subsp. bavariensis (strain ATCC BAA-2496 / DSM 23469 / PBi) (Borreliella bavariensis).